Reading from the N-terminus, the 227-residue chain is Cytochrome c oxidase subunit 2 (227 aa).

Topologically, residues 1–14 are mitochondrial intermembrane; that stretch reads MAHPAQLGFQDAAS. A helical transmembrane segment spans residues 15–45; sequence PIMEELMYFHDHTLMIVFLISSLVLYIISLM. The Mitochondrial matrix segment spans residues 46–59; it reads LTTELTHTSTMDAQ. Residues 60–87 form a helical membrane-spanning segment; it reads EVETVWTILPAVILILIALPSLRILYMM. Over 88 to 227 the chain is Mitochondrial intermembrane; the sequence is DEITTPSLTL…HFEEWLLSTL (140 aa). Residues H161, C196, E198, C200, H204, and M207 each contribute to the Cu cation site. E198 serves as a coordination point for Mg(2+).

The protein belongs to the cytochrome c oxidase subunit 2 family. In terms of assembly, component of the cytochrome c oxidase (complex IV, CIV), a multisubunit enzyme composed of 14 subunits. The complex is composed of a catalytic core of 3 subunits MT-CO1, MT-CO2 and MT-CO3, encoded in the mitochondrial DNA, and 11 supernumerary subunits COX4I, COX5A, COX5B, COX6A, COX6B, COX6C, COX7A, COX7B, COX7C, COX8 and NDUFA4, which are encoded in the nuclear genome. The complex exists as a monomer or a dimer and forms supercomplexes (SCs) in the inner mitochondrial membrane with NADH-ubiquinone oxidoreductase (complex I, CI) and ubiquinol-cytochrome c oxidoreductase (cytochrome b-c1 complex, complex III, CIII), resulting in different assemblies (supercomplex SCI(1)III(2)IV(1) and megacomplex MCI(2)III(2)IV(2)). Found in a complex with TMEM177, COA6, COX18, COX20, SCO1 and SCO2. Interacts with TMEM177 in a COX20-dependent manner. Interacts with COX20. Interacts with COX16. Cu cation is required as a cofactor.

The protein localises to the mitochondrion inner membrane. It carries out the reaction 4 Fe(II)-[cytochrome c] + O2 + 8 H(+)(in) = 4 Fe(III)-[cytochrome c] + 2 H2O + 4 H(+)(out). In terms of biological role, component of the cytochrome c oxidase, the last enzyme in the mitochondrial electron transport chain which drives oxidative phosphorylation. The respiratory chain contains 3 multisubunit complexes succinate dehydrogenase (complex II, CII), ubiquinol-cytochrome c oxidoreductase (cytochrome b-c1 complex, complex III, CIII) and cytochrome c oxidase (complex IV, CIV), that cooperate to transfer electrons derived from NADH and succinate to molecular oxygen, creating an electrochemical gradient over the inner membrane that drives transmembrane transport and the ATP synthase. Cytochrome c oxidase is the component of the respiratory chain that catalyzes the reduction of oxygen to water. Electrons originating from reduced cytochrome c in the intermembrane space (IMS) are transferred via the dinuclear copper A center (CU(A)) of subunit 2 and heme A of subunit 1 to the active site in subunit 1, a binuclear center (BNC) formed by heme A3 and copper B (CU(B)). The BNC reduces molecular oxygen to 2 water molecules using 4 electrons from cytochrome c in the IMS and 4 protons from the mitochondrial matrix. This is Cytochrome c oxidase subunit 2 (MT-CO2) from Microcebus tavaratra (Northern rufous mouse lemur).